The following is a 254-amino-acid chain: PAXIP1-associated glutamate-rich protein 1 (254 aa).

Disordered regions lie at residues 1-111 and 127-254; these read MSLA…PPSE and LQAE…QRKY. Residues 45–62 show a composition bias toward basic and acidic residues; the sequence is KAEDEGEGGREETEREGS. Over residues 78–98 the composition is skewed to acidic residues; it reads EPAEEDSEDWCVPCSDEEVEL. Residues 116–160 form a sufficient for interaction with NCOA1 region; that stretch reads YELLAAHGTLELQAEILPRRPPTPEAQSEEERSDEEPEAKEEEEE. Thr138 bears the Phosphothreonine mark. Acidic residues predominate over residues 142-159; that stretch reads QSEEERSDEEPEAKEEEE. A phosphoserine mark is found at Ser143 and Ser148. Positions 161-254 are sufficient for interaction with ESR1; sequence KPHMPTEFDF…SSLFPRQRKY (94 aa). Basic and acidic residues predominate over residues 195-223; sequence QKREARLDKVLSDMKRHKKLEEQILRTGR. A Phosphoserine modification is found at Ser237.

In terms of assembly, component of the KMT2 family MLL2/MLL3 complex (also named ASCOM complex), at least composed of the HMTs KMT2D and/or KMT2C, the common subunits ASH2L, RBBP5, WDR5 and DPY30, and the complex type-specific subunits PAXIP1/PTIP, PAGR1, NCOA6 and KDM6A; PAXIP1 is required for the association with the MLL2/MLL3 complex. Forms a constitutive complex with PAXIP1/PTIP independently of the MLL2/MLL3 complex. Interacts with NCOA1, ESR1, NR3C1, AR. In terms of tissue distribution, ubiquitously expressed.

It is found in the nucleus. In terms of biological role, its association with the histone methyltransferase MLL2/MLL3 complex is suggesting a role in epigenetic transcriptional activation. However, in association with PAXIP1/PTIP is proposed to function at least in part independently of the MLL2/MLL3 complex. Proposed to be recruited by PAXIP1 to sites of DNA damage where the PAGR1:PAXIP1 complex is required for cell survival in response to DNA damage independently of the MLL2/MLL3 complex. However, its function in DNA damage has been questioned. During immunoglobulin class switching in activated B-cells is involved in transcription regulation of downstream switch regions at the immunoglobulin heavy-chain (Igh) locus independently of the MLL2/MLL3 complex. Involved in both estrogen receptor-regulated gene transcription and estrogen-stimulated G1/S cell-cycle transition. Acts as a transcriptional cofactor for nuclear hormone receptors. Inhibits the induction properties of several steroid receptors such as NR3C1, AR and PPARG; the mechanism of inhibition appears to be gene-dependent. This is PAXIP1-associated glutamate-rich protein 1 (PAGR1) from Homo sapiens (Human).